The following is a 290-amino-acid chain: Beta carbonic anhydrase 6, mitochondrial (290 aa).

The N-terminal 20 residues, 1–20, are a transit peptide targeting the mitochondrion; it reads MAFTLGGRARRLVSATSVHQ. Phosphoserine is present on serine 122. Cysteine 226 bears the S-nitrosocysteine mark.

The protein belongs to the beta-class carbonic anhydrase family. In terms of tissue distribution, strongly expressed in aerial tissues including leaves, stems, flowers and siliques, and, to a lower extent, in roots. Accumulates in guard cells.

The protein resides in the mitochondrion. The enzyme catalyses hydrogencarbonate + H(+) = CO2 + H2O. Its function is as follows. Reversible hydration of carbon dioxide. This Arabidopsis thaliana (Mouse-ear cress) protein is Beta carbonic anhydrase 6, mitochondrial (BCA6).